The primary structure comprises 1828 residues: Chromodomain-helicase-DNA-binding protein 2 (1828 aa).

Over residues 1 to 14 the composition is skewed to basic and acidic residues; the sequence is MMRNKDKSQEEDSS. The tract at residues 1 to 243 is disordered; it reads MMRNKDKSQE…EDDDFETDSD (243 aa). The span at 15 to 75 shows a compositional bias: low complexity; the sequence is LHSNASSHSA…SESESAGSKS (61 aa). 3 stretches are compositionally biased toward basic and acidic residues: residues 81-101, 115-128, and 146-155; these read EAKE…KMWE, SRQE…KEEA, and KKQEKWKQEP. The span at 175-204 shows a compositional bias: basic residues; the sequence is VKARRPVPRRTVPKPRVKKQPKTQRGKRKK. 2 positions are modified to phosphoserine: Ser-207 and Ser-208. Acidic residues predominate over residues 234-243; that stretch reads EDDDFETDSD. Phosphothreonine is present on Thr-240. Residue Ser-242 is modified to Phosphoserine. Chromo domains follow at residues 261–353 and 378–456; these read ETIE…QWLG and QIVE…IPTR. Positions 496 to 666 constitute a Helicase ATP-binding domain; it reads AHSWCKNNSV…WSLLHFIMPE (171 aa). 509-516 lines the ATP pocket; that stretch reads DEMGLGKT. Positions 617-620 match the DEAH box motif; sequence DEAH. One can recognise a Helicase C-terminal domain in the interval 795–946; it reads LLDKLLTRLR…HLVIQRMDTT (152 aa). Disordered regions lie at residues 1030–1124, 1331–1462, 1556–1638, and 1680–1828; these read EDEE…RSVR, VTGG…DEDD, HKKR…ADRG, and HMDA…VRKT. The span at 1037-1065 shows a compositional bias: basic and acidic residues; it reads ERPHKDWDEIIPEEQRKKVEEEERQKELE. Ser-1085, Ser-1087, Ser-1365, and Ser-1386 each carry phosphoserine. The segment covering 1347–1371 has biased composition (basic and acidic residues); it reads KKENKVPRLKEEHGIELSSPRHSDN. 2 stretches are compositionally biased toward basic and acidic residues: residues 1396 to 1431 and 1565 to 1574; these read ENKE…KSGD and EQKKKDDVTG. Positions 1464–1566 are CHD1 helical C-terminal domain (CHCT); that stretch reads LDQETFSICK…KKRSQEEEEQ (103 aa). Positions 1584–1601 are enriched in polar residues; sequence SGSSRDSLISQSHTSHNL. Composition is skewed to basic and acidic residues over residues 1698-1720, 1739-1749, 1760-1772, and 1795-1814; these read RPYD…DRHH, QDFRRMSDHRP, DHYR…KLGE, and SPHD…RSLE. Ser-1807 carries the phosphoserine modification.

The protein belongs to the SNF2/RAD54 helicase family. Interacts with MYOD1. Interacts with histone H3.3.

The protein localises to the nucleus. It catalyses the reaction ATP + H2O = ADP + phosphate + H(+). ATP-dependent chromatin-remodeling factor that specifically binds to the promoter of target genes, leading to chromatin remodeling, possibly by promoting deposition of histone H3.3. Involved in myogenesis via interaction with MYOD1: binds to myogenic gene regulatory sequences and mediates incorporation of histone H3.3 prior to the onset of myogenic gene expression, promoting their expression. In Homo sapiens (Human), this protein is Chromodomain-helicase-DNA-binding protein 2 (CHD2).